Here is a 122-residue protein sequence, read N- to C-terminus: UPF0102 protein Ping_1176 (122 aa).

The protein belongs to the UPF0102 family.

The polypeptide is UPF0102 protein Ping_1176 (Psychromonas ingrahamii (strain DSM 17664 / CCUG 51855 / 37)).